The following is a 378-amino-acid chain: Erythronate-4-phosphate dehydrogenase (378 aa).

Substrate contacts are provided by serine 45 and threonine 66. NAD(+) contacts are provided by aspartate 146 and threonine 175. The active site involves arginine 208. Aspartate 232 provides a ligand contact to NAD(+). Glutamate 237 is a catalytic residue. Residue histidine 254 is the Proton donor of the active site. Glycine 257 is an NAD(+) binding site. Tyrosine 258 is a substrate binding site.

The protein belongs to the D-isomer specific 2-hydroxyacid dehydrogenase family. PdxB subfamily. In terms of assembly, homodimer.

The protein localises to the cytoplasm. It carries out the reaction 4-phospho-D-erythronate + NAD(+) = (R)-3-hydroxy-2-oxo-4-phosphooxybutanoate + NADH + H(+). The protein operates within cofactor biosynthesis; pyridoxine 5'-phosphate biosynthesis; pyridoxine 5'-phosphate from D-erythrose 4-phosphate: step 2/5. In terms of biological role, catalyzes the oxidation of erythronate-4-phosphate to 3-hydroxy-2-oxo-4-phosphonooxybutanoate. This Escherichia coli O8 (strain IAI1) protein is Erythronate-4-phosphate dehydrogenase.